Reading from the N-terminus, the 227-residue chain is Cytidylate kinase (227 aa).

An ATP-binding site is contributed by 7–15 (GPAGSGKST).

Belongs to the cytidylate kinase family. Type 1 subfamily.

The protein localises to the cytoplasm. It catalyses the reaction CMP + ATP = CDP + ADP. The catalysed reaction is dCMP + ATP = dCDP + ADP. This chain is Cytidylate kinase, found in Salinibacter ruber (strain DSM 13855 / M31).